The sequence spans 193 residues: NADH-quinone oxidoreductase subunit B (193 aa).

[4Fe-4S] cluster-binding residues include C72, C73, C137, and C167.

It belongs to the complex I 20 kDa subunit family. As to quaternary structure, NDH-1 is composed of 14 different subunits. Subunits NuoB, C, D, E, F, and G constitute the peripheral sector of the complex. [4Fe-4S] cluster serves as cofactor.

The protein localises to the cell inner membrane. The catalysed reaction is a quinone + NADH + 5 H(+)(in) = a quinol + NAD(+) + 4 H(+)(out). In terms of biological role, NDH-1 shuttles electrons from NADH, via FMN and iron-sulfur (Fe-S) centers, to quinones in the respiratory chain. The immediate electron acceptor for the enzyme in this species is believed to be ubiquinone. Couples the redox reaction to proton translocation (for every two electrons transferred, four hydrogen ions are translocated across the cytoplasmic membrane), and thus conserves the redox energy in a proton gradient. The protein is NADH-quinone oxidoreductase subunit B of Caulobacter vibrioides (strain ATCC 19089 / CIP 103742 / CB 15) (Caulobacter crescentus).